Here is an 82-residue protein sequence, read N- to C-terminus: MPKRTLQGVVVSDKQAKTVVVRVDRRFTHPIYKKTIRRSKNYHAHDENDQFHPGDMVWIEESKPISKLKRWTVVRGEPKKTA.

Belongs to the universal ribosomal protein uS17 family. Part of the 30S ribosomal subunit.

Its function is as follows. One of the primary rRNA binding proteins, it binds specifically to the 5'-end of 16S ribosomal RNA. This is Small ribosomal subunit protein uS17 from Rhodopseudomonas palustris (strain HaA2).